The following is a 133-amino-acid chain: Holo-[acyl-carrier-protein] synthase (133 aa).

Mg(2+) is bound by residues Asp-8 and Glu-56.

Belongs to the P-Pant transferase superfamily. AcpS family. It depends on Mg(2+) as a cofactor.

The protein resides in the cytoplasm. It carries out the reaction apo-[ACP] + CoA = holo-[ACP] + adenosine 3',5'-bisphosphate + H(+). Transfers the 4'-phosphopantetheine moiety from coenzyme A to a Ser of acyl-carrier-protein. The protein is Holo-[acyl-carrier-protein] synthase of Clostridium perfringens (strain 13 / Type A).